The chain runs to 273 residues: Undecaprenyl-diphosphatase (273 aa).

The next 7 membrane-spanning stretches (helical) occupy residues 6-26 (SLLV…LPVS), 45-65 (AKTF…VMFW), 90-110 (LTLI…LLFH), 116-136 (LFNP…LIAA), 190-210 (YAAS…ATAL), 222-242 (GDIP…LVAI), and 252-272 (ISFI…YVVF).

This sequence belongs to the UppP family.

The protein resides in the cell inner membrane. The catalysed reaction is di-trans,octa-cis-undecaprenyl diphosphate + H2O = di-trans,octa-cis-undecaprenyl phosphate + phosphate + H(+). Catalyzes the dephosphorylation of undecaprenyl diphosphate (UPP). Confers resistance to bacitracin. In Escherichia fergusonii (strain ATCC 35469 / DSM 13698 / CCUG 18766 / IAM 14443 / JCM 21226 / LMG 7866 / NBRC 102419 / NCTC 12128 / CDC 0568-73), this protein is Undecaprenyl-diphosphatase.